The chain runs to 301 residues: Aldose reductase (301 aa).

11–20 is a binding site for NADP(+); the sequence is GKEIPTVGLG. The active-site Proton donor is Tyr51. Substrate is bound at residue His111. 209 to 266 lines the NADP(+) pocket; sequence SSLGSAPGSSAKVRDDKTIKAIAKKYGCAPSQIILSYITAQGICVIPKSRSKEHLREN.

The protein belongs to the aldo/keto reductase family.

Its subcellular location is the cytoplasm. The enzyme catalyses an alditol + NAD(+) = an aldose + NADH + H(+). It carries out the reaction an alditol + NADP(+) = an aldose + NADPH + H(+). Its function is as follows. Catalyzes the NADPH-dependent reduction of a wide variety of carbonyl-containing compounds to their corresponding alcohols with a broad range of catalytic efficiencies. The sequence is that of Aldose reductase from Encephalitozoon cuniculi (strain GB-M1) (Microsporidian parasite).